We begin with the raw amino-acid sequence, 141 residues long: Transcription antitermination protein NusB (141 aa).

Belongs to the NusB family.

In terms of biological role, involved in transcription antitermination. Required for transcription of ribosomal RNA (rRNA) genes. Binds specifically to the boxA antiterminator sequence of the ribosomal RNA (rrn) operons. In Fervidobacterium nodosum (strain ATCC 35602 / DSM 5306 / Rt17-B1), this protein is Transcription antitermination protein NusB.